A 484-amino-acid polypeptide reads, in one-letter code: Glutamyl-tRNA(Gln) amidotransferase subunit A (484 aa).

Catalysis depends on charge relay system residues Lys-76 and Ser-151. Ser-175 acts as the Acyl-ester intermediate in catalysis.

The protein belongs to the amidase family. GatA subfamily. In terms of assembly, heterotrimer of A, B and C subunits.

It carries out the reaction L-glutamyl-tRNA(Gln) + L-glutamine + ATP + H2O = L-glutaminyl-tRNA(Gln) + L-glutamate + ADP + phosphate + H(+). Allows the formation of correctly charged Gln-tRNA(Gln) through the transamidation of misacylated Glu-tRNA(Gln) in organisms which lack glutaminyl-tRNA synthetase. The reaction takes place in the presence of glutamine and ATP through an activated gamma-phospho-Glu-tRNA(Gln). The polypeptide is Glutamyl-tRNA(Gln) amidotransferase subunit A (Alkalilimnicola ehrlichii (strain ATCC BAA-1101 / DSM 17681 / MLHE-1)).